The following is a 258-amino-acid chain: Type III pantothenate kinase (258 aa).

6–13 provides a ligand contact to ATP; the sequence is DVGNTNTV. Substrate is bound by residues Tyr100 and 107–110; that span reads GADR. Asp109 serves as the catalytic Proton acceptor. Asp129 is a K(+) binding site. Thr132 lines the ATP pocket. Thr184 is a binding site for substrate.

Belongs to the type III pantothenate kinase family. Homodimer. Requires NH4(+) as cofactor. K(+) is required as a cofactor.

The protein resides in the cytoplasm. The catalysed reaction is (R)-pantothenate + ATP = (R)-4'-phosphopantothenate + ADP + H(+). The protein operates within cofactor biosynthesis; coenzyme A biosynthesis; CoA from (R)-pantothenate: step 1/5. Its function is as follows. Catalyzes the phosphorylation of pantothenate (Pan), the first step in CoA biosynthesis. The chain is Type III pantothenate kinase from Bacillus licheniformis (strain ATCC 14580 / DSM 13 / JCM 2505 / CCUG 7422 / NBRC 12200 / NCIMB 9375 / NCTC 10341 / NRRL NRS-1264 / Gibson 46).